The chain runs to 1159 residues: Calcium-activated potassium channel subunit alpha-1 (1159 aa).

At 1–24 the chain is on the extracellular side; sequence EPNMDALIIPVTMEVPCDSRGQRM. Residues 25-45 traverse the membrane as a helical segment; that stretch reads WWAFLASSMVTFFGGLFIILL. Over 46-116 the chain is Cytoplasmic; sequence WRTLKYLWTV…MISAQTLTGR (71 aa). S-palmitoyl cysteine attachment occurs at residues cysteine 56, cysteine 57, and cysteine 59. Residues 117–137 form a helical membrane-spanning segment; that stretch reads VLVVLVFALSIGALVIYFIDS. At 138–152 the chain is on the extracellular side; that stretch reads SNPIESCQNFYKDFT. Residues 153-173 form a helical membrane-spanning segment; it reads LQIDMAFNVFFLLYFGLRFIA. The Cytoplasmic portion of the chain corresponds to 174 to 177; that stretch reads ANDN. A helical transmembrane segment spans residues 178 to 198; sequence LWFWLEVNSVVDFFTVPPVFV. Residues 199-202 lie on the Extracellular side of the membrane; sequence SVYL. Residues 203–223 form a helical; Voltage-sensor membrane-spanning segment; it reads NRSWLGLRFLRALRLIQFSEI. The Cytoplasmic portion of the chain corresponds to 224-238; sequence LQFLNILKTSNSIKL. Residues 239 to 259 traverse the membrane as a helical segment; that stretch reads VNLLSIFISTWLTAAGFIHLV. The Extracellular portion of the chain corresponds to 260–273; the sequence is ENSGDPWENFQNSQ. An intramembrane region (pore-forming) is located at residues 274 to 296; the sequence is ALTYWECVYLLMVTMSTVGYGDV. The Selectivity for potassium signature appears at 290–293; it reads TVGY. At 297 to 305 the chain is on the extracellular side; the sequence is YAKTTPGGL. Residues 306 to 326 traverse the membrane as a helical segment; it reads FIVFFILGGLAMFASYVPEII. Topologically, residues 327–1159 are cytoplasmic; that stretch reads EIIGNRKKYG…PPIREVEDEC (833 aa). An RCK N-terminal 1 domain is found at 345-487; it reads RKHIVVCGHI…WNWKEGDDAI (143 aa). Glutamate 377, glutamine 400, and glutamate 402 together coordinate Mg(2+). Positions 494–514 are segment S7; sequence LGFIAQSCLAQGLSTMLANLF. The interval 551–571 is segment S8; the sequence is LSFPTVCELCFVKLKLLMIAI. Residues 615–619 are heme-binding motif; that stretch reads CKACH. The interval 639–668 is disordered; it reads EQPSTLSPKKKQRNGGMRNSPSSSPKLMRH. Threonine 643 is subject to Phosphothreonine. Residues serine 645, serine 658, and serine 662 each carry the phosphoserine modification. Residues 717–737 form a segment S9 region; it reads VLSGHVVVCIFGHVSSALIGL. The region spanning 719–863 is the RCK N-terminal 2 domain; it reads SGHVVVCIFG…MDKSSPDNSP (145 aa). Position 850 is a phosphothreonine (threonine 850). Serine 858 and serine 862 each carry phosphoserine. The Calcium bowl signature appears at 883–905; that stretch reads TELVNDTNVQFLDQDDDDDPDTE. Ca(2+) is bound by residues glutamine 892, aspartate 895, aspartate 898, and aspartate 900. The tract at residues 912–932 is segment S10; it reads FACGTAFAVSVLDSLMSATYF. Low complexity predominate over residues 1066-1091; it reads RASLSHSSHSSQSSSKKSSSVHSIPS. The disordered stretch occupies residues 1066 to 1124; sequence RASLSHSSHSSQSSSKKSSSVHSIPSTANRQNRPKSRESRDKQTEKKWFTDEPDNAYPR. The segment covering 1100–1115 has biased composition (basic and acidic residues); that stretch reads KSRESRDKQTEKKWFT. Phosphoserine occurs at positions 1101 and 1104.

Belongs to the potassium channel family. Calcium-activated (TC 1.A.1.3) subfamily. KCa1.1/KCNMA1 sub-subfamily. Homotetramer; which constitutes the calcium-activated potassium channel. Interacts with beta subunits KCNMB1, KCNMB2, KCNMB3 and KCNMB4. Interacts with gamma subunits LRRC26, LRRC38, LRRC52 and LRRC55. Beta and gamma subunits are accessory, and modulate its activity. Interacts with RAB11B. In terms of processing, phosphorylated. Phosphorylation by kinases such as PKA and/or PKG. In smooth muscles, phosphorylation affects its activity. Post-translationally, palmitoylation by ZDHHC22 and ZDHHC23 within the intracellular linker between the S0 and S1 transmembrane domains regulates localization to the plasma membrane. Depalmitoylated by LYPLA1 and LYPLAL1, leading to retard exit from the trans-Golgi network. As to expression, expressed in all vascular and smooth muscles.

It localises to the cell membrane. It catalyses the reaction K(+)(in) = K(+)(out). With respect to regulation, ethanol and carbon monoxide-bound heme increase channel activation. Heme inhibits channel activation. Functionally, potassium channel activated by both membrane depolarization or increase in cytosolic Ca(2+) that mediates export of K(+). It is also activated by the concentration of cytosolic Mg(2+). Its activation dampens the excitatory events that elevate the cytosolic Ca(2+) concentration and/or depolarize the cell membrane. It therefore contributes to repolarization of the membrane potential. Plays a key role in controlling excitability in a number of systems, such as regulation of the contraction of smooth muscle, the tuning of hair cells in the cochlea, regulation of transmitter release, and innate immunity. In smooth muscles, its activation by high level of Ca(2+), caused by ryanodine receptors in the sarcoplasmic reticulum, regulates the membrane potential. In cochlea cells, its number and kinetic properties partly determine the characteristic frequency of each hair cell and thereby helps to establish a tonotopic map. Kinetics of KCNMA1 channels are determined by alternative splicing, phosphorylation status and its combination with modulating beta subunits. Highly sensitive to both iberiotoxin (IbTx) and charybdotoxin (CTX). This chain is Calcium-activated potassium channel subunit alpha-1 (KCNMA1), found in Canis lupus familiaris (Dog).